The chain runs to 1411 residues: Early endosome antigen 1 (1411 aa).

The disordered stretch occupies residues 1-27 (MFRRILQRTPGRVGSQGSDLDSSATPI). Polar residues predominate over residues 15–27 (SQGSDLDSSATPI). The C2H2-type zinc finger occupies 41–64 (FICPQCMKSLGSADELFKHYQAVH). A phosphoserine mark is found at serine 52 and serine 70. Residues 78–1348 (LALTRDDITL…IKHTQALNRK (1271 aa)) adopt a coiled-coil conformation. Disordered stretches follow at residues 476–501 (STELQHQLEKSKQQHQEQQALQQSAT) and 1189–1217 (EKESQQLMREQVKKEEEKRKEEFSEKEAK). The segment covering 481–490 (HQLEKSKQQH) has biased composition (basic and acidic residues). Low complexity predominate over residues 491 to 500 (QEQQALQQSA). Residues 1352 to 1410 (DNEVQNCMSCGKCFSVTVRRHHCRQCGNIFCAECSTKNALTPSSKKPVRVCDACFNDLQ) form an FYVE-type zinc finger. Residues cysteine 1358, cysteine 1361, cysteine 1374, cysteine 1377, cysteine 1382, cysteine 1385, cysteine 1402, and cysteine 1405 each coordinate Zn(2+).

In terms of assembly, homodimer. Binds STX6. Binds RAB5A, RAB5B, RAB5C and RAB22A that have been activated by GTP-binding. Interacts with ERBB2. Interacts with RAB31. Interacts with SAMD9 and SAMD9L. May interact with PLEKHF2.

It localises to the cytoplasm. It is found in the early endosome membrane. Binds phospholipid vesicles containing phosphatidylinositol 3-phosphate and participates in endosomal trafficking. This is Early endosome antigen 1 (Eea1) from Mus musculus (Mouse).